We begin with the raw amino-acid sequence, 622 residues long: Low affinity potassium transport system protein Kup (622 aa).

12 consecutive transmembrane segments (helical) span residues 9–29 (LSAI…TSPL), 49–69 (VFGF…IKYL), 103–123 (VIMG…TPAI), 137–157 (PELD…LFMI), 165–185 (VGKL…GLGL), 213–233 (VSFI…ALYA), 247–267 (WFSV…ALLL), 276–296 (PFFL…AALA), 337–357 (IYIP…IVSF), 363–383 (LAAA…ILST), 396–416 (FVAL…SANL), and 419–439 (LLSG…IMTT).

Belongs to the HAK/KUP transporter (TC 2.A.72) family.

The protein localises to the cell inner membrane. It carries out the reaction K(+)(in) + H(+)(in) = K(+)(out) + H(+)(out). In terms of biological role, responsible for the low-affinity transport of potassium into the cell. Likely operates as a K(+):H(+) symporter. The polypeptide is Low affinity potassium transport system protein Kup (Citrobacter koseri (strain ATCC BAA-895 / CDC 4225-83 / SGSC4696)).